Here is a 551-residue protein sequence, read N- to C-terminus: Glucose-6-phosphate isomerase (551 aa).

Glu-352 functions as the Proton donor in the catalytic mechanism. Catalysis depends on residues His-383 and Lys-511.

It belongs to the GPI family.

The protein resides in the cytoplasm. It catalyses the reaction alpha-D-glucose 6-phosphate = beta-D-fructose 6-phosphate. Its pathway is carbohydrate biosynthesis; gluconeogenesis. It participates in carbohydrate degradation; glycolysis; D-glyceraldehyde 3-phosphate and glycerone phosphate from D-glucose: step 2/4. In terms of biological role, catalyzes the reversible isomerization of glucose-6-phosphate to fructose-6-phosphate. The protein is Glucose-6-phosphate isomerase of Chlorobium luteolum (strain DSM 273 / BCRC 81028 / 2530) (Pelodictyon luteolum).